The primary structure comprises 301 residues: XIAP-associated factor 1 (301 aa).

The segment at 22–99 adopts a TRAF-type zinc-finger fold; the sequence is LHEAYCLRFL…KLDMQLSKLE (78 aa). Positions 189 to 257 are disordered; sequence ILPSSLPSQA…KPRTSSPRGD (69 aa). The span at 193–205 shows a compositional bias: polar residues; the sequence is SLPSQAAENQTST.

As to quaternary structure, interacts with BIRC4; the interaction is not detected in. Interacts with BIRC1, BIRC2, BIRC3, BIRC7 and BIRC8. Part of an complex consisting of BIRC4, XAF1 and BIRC5; the complex formation requires IFN-beta stimulation. Interacts with RNF114, the interaction increases XAF1 stability and proapoptotic effects, and may regulate IFN signaling. As to expression, widely expressed. Expression is frequently down-regulated in cancer cell lines. Isoform 5 is widely expressed. Expressed in placenta (at protein level).

Its subcellular location is the cytoplasm. It localises to the nucleus. The protein resides in the mitochondrion. In terms of biological role, seems to function as a negative regulator of members of the IAP (inhibitor of apoptosis protein) family. Inhibits anti-caspase activity of BIRC4. Induces cleavage and inactivation of BIRC4 independent of caspase activation. Mediates TNF-alpha-induced apoptosis and is involved in apoptosis in trophoblast cells. May inhibit BIRC4 indirectly by activating the mitochondrial apoptosis pathway. After translocation to mitochondria, promotes translocation of BAX to mitochondria and cytochrome c release from mitochondria. Seems to promote the redistribution of BIRC4 from the cytoplasm to the nucleus, probably independent of BIRC4 inactivation which seems to occur in the cytoplasm. The BIRC4-XAF1 complex mediates down-regulation of BIRC5/survivin; the process requires the E3 ligase activity of BIRC4. Seems to be involved in cellular sensitivity to the proapoptotic actions of TRAIL. May be a tumor suppressor by mediating apoptosis resistance of cancer cells. The sequence is that of XIAP-associated factor 1 (XAF1) from Homo sapiens (Human).